The chain runs to 100 residues: Small ribosomal subunit protein uS14c (100 aa).

This sequence belongs to the universal ribosomal protein uS14 family. Part of the 30S ribosomal subunit.

The protein localises to the plastid. It is found in the chloroplast. Binds 16S rRNA, required for the assembly of 30S particles. This is Small ribosomal subunit protein uS14c from Amborella trichopoda.